Here is a 304-residue protein sequence, read N- to C-terminus: 2-oxoacid:ferredoxin oxidoreductase 2, subunit beta (304 aa).

[4Fe-4S] cluster is bound by residues Cys-12, Cys-15, and Cys-46. Thiamine diphosphate contacts are provided by residues 44-47 (IGCS) and His-65. Asp-90 is a binding site for Mg(2+). 91–92 (GD) contributes to the thiamine diphosphate binding site. Mg(2+)-binding residues include Asn-118 and Val-120. 122–123 (GL) provides a ligand contact to thiamine diphosphate. Cys-197 contributes to the [4Fe-4S] cluster binding site.

As to quaternary structure, heterodimer composed of an alpha and a beta subunit. [4Fe-4S] cluster is required as a cofactor. It depends on thiamine diphosphate as a cofactor. Requires Mg(2+) as cofactor.

It catalyses the reaction a 2-oxocarboxylate + 2 oxidized [2Fe-2S]-[ferredoxin] + CoA = an acyl-CoA + 2 reduced [2Fe-2S]-[ferredoxin] + CO2 + H(+). Its function is as follows. Catalyzes the coenzyme A-dependent oxidative decarboxylation of different 2-oxoacids such as 2-oxoglutarate, pyruvate and 2-oxobutyrate to form their CoA derivatives. The sequence is that of 2-oxoacid:ferredoxin oxidoreductase 2, subunit beta from Sulfurisphaera tokodaii (strain DSM 16993 / JCM 10545 / NBRC 100140 / 7) (Sulfolobus tokodaii).